The following is a 374-amino-acid chain: Pectate lyase 2 (374 aa).

The first 22 residues, 1–22 (MKYLLPTAAAGLLLLAAQPAMA), serve as a signal peptide directing secretion. Residues Cys-93 and Cys-176 are joined by a disulfide bond. Residues Asp-150, Asp-152, Glu-187, and Asp-191 each contribute to the Ca(2+) site. Arg-239 is a catalytic residue. Residues Cys-350 and Cys-373 are joined by a disulfide bond.

The protein belongs to the polysaccharide lyase 1 family. PLADES subfamily. It depends on Ca(2+) as a cofactor.

Its subcellular location is the secreted. It carries out the reaction Eliminative cleavage of (1-&gt;4)-alpha-D-galacturonan to give oligosaccharides with 4-deoxy-alpha-D-galact-4-enuronosyl groups at their non-reducing ends.. It functions in the pathway glycan metabolism; pectin degradation; 2-dehydro-3-deoxy-D-gluconate from pectin: step 2/5. Functionally, involved in maceration and soft-rotting of plant tissue. The polypeptide is Pectate lyase 2 (pel2) (Pectobacterium carotovorum (Erwinia carotovora)).